The primary structure comprises 295 residues: Glycine--tRNA ligase alpha subunit (295 aa).

This sequence belongs to the class-II aminoacyl-tRNA synthetase family. In terms of assembly, tetramer of two alpha and two beta subunits.

Its subcellular location is the cytoplasm. It carries out the reaction tRNA(Gly) + glycine + ATP = glycyl-tRNA(Gly) + AMP + diphosphate. The polypeptide is Glycine--tRNA ligase alpha subunit (Bacillus licheniformis (strain ATCC 14580 / DSM 13 / JCM 2505 / CCUG 7422 / NBRC 12200 / NCIMB 9375 / NCTC 10341 / NRRL NRS-1264 / Gibson 46)).